Consider the following 331-residue polypeptide: Type 2 lactosamine alpha-2,3-sialyltransferase (331 aa).

Residues 1-4 are Cytoplasmic-facing; it reads MRGY. A helical; Signal-anchor for type II membrane protein transmembrane segment spans residues 5 to 25; sequence LVAIFLSAVFLYYVLHCILWG. The Lumenal portion of the chain corresponds to 26-331; it reads TNVYWVAPVE…KNLVINLTQD (306 aa). N-linked (GlcNAc...) asparagine glycosylation is found at Asn-129, Asn-181, Asn-282, Asn-295, Asn-308, and Asn-327.

Belongs to the glycosyltransferase 29 family.

It localises to the golgi apparatus membrane. The enzyme catalyses a neolactoside nLc4Cer(d18:1(4E)) + CMP-N-acetyl-beta-neuraminate = a neolactoside IV(3)-alpha-NeuAc-nLc4Cer(d18:1(4E)) + CMP + H(+). The catalysed reaction is a beta-D-galactosyl-(1-&gt;4)-N-acetyl-beta-D-glucosaminyl derivative + CMP-N-acetyl-beta-neuraminate = an N-acetyl-alpha-neuraminyl-(2-&gt;3)-beta-D-galactosyl-(1-&gt;4)-N-acetyl-beta-D-glucosaminyl derivative + CMP + H(+). It carries out the reaction a neolactoside nLc6Cer(d18:1(4E)) + CMP-N-acetyl-beta-neuraminate = a neolactoside VI(3)-alpha-NeuNAc-nLc6Cer(d18:1(4E)) + CMP + H(+). Functionally, transfers the sialyl residue from CMP-N-acetyl-beta-neuraminate to the terminal galactose residue on sugar chains of glycoproteins and glycolipids. It's alpha-2,3-sialyltransferase activity is specific toward type II glycan chains (Galbeta1-4GlcNAc) on glycoproteins and glycolipids such as neolactosides nLc4Cer and nLc6Cer, whose sialyl-products serve as precursors for the Lewis X antigen. Critically involved in the synthesis of functional selectin ligands needed for neutrophil recruitment during inflammation and lymphocyte homing to the lymph nodes. The sequence is that of Type 2 lactosamine alpha-2,3-sialyltransferase (ST3GAL6) from Pan troglodytes (Chimpanzee).